A 623-amino-acid chain; its full sequence is Laccase-1 (623 aa).

The signal sequence occupies residues 1 to 22; the sequence is MKTFTSALALVVGMLAPGAVVA. A propeptide spanning residues 23–50 is cleaved from the precursor; it reads APPSTPAQRDLVELREARQEGGKDLRPR. A disulfide bridge links cysteine 54 with cysteine 62. Asparagine 89 and asparagine 138 each carry an N-linked (GlcNAc...) asparagine glycan. Histidine 143, histidine 145, histidine 188, and histidine 190 together coordinate Cu cation. 2 disulfide bridges follow: cysteine 164-cysteine 590 and cysteine 348-cysteine 382. N-linked (GlcNAc...) asparagine glycans are attached at residues asparagine 251, asparagine 266, asparagine 294, and asparagine 339. Asparagine 426 and asparagine 446 each carry an N-linked (GlcNAc...) asparagine glycan. Cu cation is bound by residues histidine 481, histidine 484, histidine 486, histidine 552, cysteine 553, histidine 554, and histidine 558. A propeptide spanning residues 610-623 is cleaved from the precursor; it reads KRRRWVEESEWLVR.

This sequence belongs to the multicopper oxidase family. In terms of assembly, monomer. It depends on Cu cation as a cofactor. In terms of tissue distribution, secreted protein; extracellular space.

It carries out the reaction 4 hydroquinone + O2 = 4 benzosemiquinone + 2 H2O. In terms of biological role, lignin degradation and detoxification of lignin-derived products. This is Laccase-1 (LAC1) from Melanocarpus albomyces.